The sequence spans 238 residues: 15,16-dihydrobiliverdin:ferredoxin oxidoreductase (238 aa).

This sequence belongs to the HY2 family.

It carries out the reaction 15,16-dihydrobiliverdin + oxidized 2[4Fe-4S]-[ferredoxin] = biliverdin IXalpha + reduced 2[4Fe-4S]-[ferredoxin] + 2 H(+). Catalyzes the two-electron reduction of biliverdin IX-alpha at the C15 methine bridge. The chain is 15,16-dihydrobiliverdin:ferredoxin oxidoreductase from Prochlorococcus marinus (strain MIT 9211).